Consider the following 605-residue polypeptide: IQ domain-containing protein IQM2 (605 aa).

One can recognise an IQ domain in the interval 105 to 134 (KHEAAIKLQKVYKSFRTRRKLADCAVLVEQ). The segment at 408-505 (QDKVDPSGEE…EEGETKESEV (98 aa)) is disordered. The segment covering 425–440 (SISRKQSDLETPEKME) has biased composition (basic and acidic residues). The segment covering 462-480 (DYDSGDDEEEEEEMFELEQ) has biased composition (acidic residues). Low complexity predominate over residues 481–490 (ESMPSEQSSP). Positions 491-505 (RGEEKEEGETKESEV) are enriched in basic and acidic residues.

Expressed in rosette and cauline leaves, stems, flowers and siliques, and at lower levels in roots.

It is found in the cytoplasm. The protein localises to the nucleus. May be involved in biotic and abiotic stress responses. The sequence is that of IQ domain-containing protein IQM2 from Arabidopsis thaliana (Mouse-ear cress).